The sequence spans 291 residues: 2-C-methyl-D-erythritol 4-phosphate cytidylyltransferase (291 aa).

The tract at residues 1–23 (MTERDFDTPVETPTVQPAPAQGA) is disordered.

Belongs to the IspD/TarI cytidylyltransferase family. IspD subfamily.

The catalysed reaction is 2-C-methyl-D-erythritol 4-phosphate + CTP + H(+) = 4-CDP-2-C-methyl-D-erythritol + diphosphate. Its pathway is isoprenoid biosynthesis; isopentenyl diphosphate biosynthesis via DXP pathway; isopentenyl diphosphate from 1-deoxy-D-xylulose 5-phosphate: step 2/6. Functionally, catalyzes the formation of 4-diphosphocytidyl-2-C-methyl-D-erythritol from CTP and 2-C-methyl-D-erythritol 4-phosphate (MEP). The polypeptide is 2-C-methyl-D-erythritol 4-phosphate cytidylyltransferase (Bifidobacterium longum (strain DJO10A)).